The following is a 1261-amino-acid chain: Apoptotic protease-activating factor 1 (1261 aa).

The 90-residue stretch at 1 to 90 folds into the CARD domain; it reads MEERARSRLL…GDLASLLHSD (90 aa). The NB-ARC domain maps to 106–417; the sequence is VSPSVQAILS…LELEEVEDVL (312 aa). Position 154–161 (154–161) interacts with ATP; sequence GMAGSGKS. 13 WD repeats span residues 615–654, 657–696, 700–743, 746–785, 798–836, 840–879, 882–921, 964–1003, 1006–1045, 1047–1088, 1091–1130, 1133–1172, and 1184–1223; these read PHQG…KLLE, AHEE…LIRE, EHEE…SQNT, GHME…EWKS, EIKA…LLLK, SRLS…KKAE, GHLS…TSSA, ELSS…ASVK, GHTK…CMVL, GHME…MLQD, CHEG…MLFL, GHKD…LLKI, and YHAG…QTFY.

In terms of assembly, monomer. Oligomerizes upon binding of cytochrome c and dATP.

Its subcellular location is the cytoplasm. Its function is as follows. Oligomeric Apaf-1 mediates the cytochrome c-dependent autocatalytic activation of pro-caspase-9 (Apaf-3), leading to the activation of caspase-3 and apoptosis. This activation requires ATP. The sequence is that of Apoptotic protease-activating factor 1 (apaf1) from Danio rerio (Zebrafish).